The chain runs to 79 residues: RNA-binding protein Hfq (79 aa).

In terms of domain architecture, Sm spans 9–69 (DTFLNHLRKE…ISTFTPQRPV (61 aa)).

It belongs to the Hfq family. As to quaternary structure, homohexamer.

In terms of biological role, RNA chaperone that binds small regulatory RNA (sRNAs) and mRNAs to facilitate mRNA translational regulation in response to envelope stress, environmental stress and changes in metabolite concentrations. Also binds with high specificity to tRNAs. The polypeptide is RNA-binding protein Hfq (Brevibacillus brevis (strain 47 / JCM 6285 / NBRC 100599)).